A 308-amino-acid chain; its full sequence is MSEQFLYFLQQMFNGVTLGSTYALIAIGYTMVYGIIGMINFAHGEVYMIGSYVSFMIIAALMMMGIDTSWLLVAAGFIGAIIIASAYGWSIERVAYRPVRNSKRLIALISAIGMSIFLQNYVSLTEGSRDVALPSLFNGQWIVGSSENFSASITTMQAVIWIVTFLAMLALTIFIRYSRMGRACRACAEDLKMASLLGINTDRVIALTFVIGAAMAAVAGVLLGQFYGVINPYIGFMAGMKAFTAAVLGGIGSIPGAMIGGLILGVAEALSSAYLSTEYKDVVSFALLILVLLVMPTGILGRPEVEKV.

Residues 1 to 21 (MSEQFLYFLQQMFNGVTLGST) are Cytoplasmic-facing. The chain crosses the membrane as a helical span at residues 22 to 42 (YALIAIGYTMVYGIIGMINFA). At 43–45 (HGE) the chain is on the periplasmic side. Residues 46-66 (VYMIGSYVSFMIIAALMMMGI) form a helical membrane-spanning segment. The Cytoplasmic segment spans residues 67-70 (DTSW). Residues 71–91 (LLVAAGFIGAIIIASAYGWSI) traverse the membrane as a helical segment. Over 92-104 (ERVAYRPVRNSKR) the chain is Periplasmic. Residues 105–125 (LIALISAIGMSIFLQNYVSLT) traverse the membrane as a helical segment. Topologically, residues 126–154 (EGSRDVALPSLFNGQWIVGSSENFSASIT) are cytoplasmic. Residues 155–175 (TMQAVIWIVTFLAMLALTIFI) form a helical membrane-spanning segment. Topologically, residues 176–203 (RYSRMGRACRACAEDLKMASLLGINTDR) are periplasmic. Residues 204–224 (VIALTFVIGAAMAAVAGVLLG) form a helical membrane-spanning segment. Residues 225-246 (QFYGVINPYIGFMAGMKAFTAA) lie on the Cytoplasmic side of the membrane. A helical transmembrane segment spans residues 247 to 266 (VLGGIGSIPGAMIGGLILGV). Over 267 to 280 (AEALSSAYLSTEYK) the chain is Periplasmic. The chain crosses the membrane as a helical span at residues 281 to 301 (DVVSFALLILVLLVMPTGILG). Residues 302-308 (RPEVEKV) are Cytoplasmic-facing.

The protein belongs to the binding-protein-dependent transport system permease family. LivHM subfamily.

It is found in the cell inner membrane. In terms of biological role, part of the binding-protein-dependent transport system for branched-chain amino acids. Probably responsible for the translocation of the substrates across the membrane. The protein is High-affinity branched-chain amino acid transport system permease protein LivH (livH) of Salmonella typhimurium (strain LT2 / SGSC1412 / ATCC 700720).